A 318-amino-acid polypeptide reads, in one-letter code: MKKTANKVVLIGAGSVGTSFLYAAINQGIAEHYVLIDAFPQPAEGNALDLSDTLAVIPHSFTSIKAGSYEDCKDADVVVITAGRPQKPGETRLEMVAGNAEIMKNIATEVKKSGFDGITVIASNPVDVITHVYQKVTGFDPHKVIGSGTTLDSARLRRLVGQKLNVKPESVQAYVAGEHGDSSVAIWSQANIMGRPILDYVKCGCLTLEDLDQIQKDTVDMAYKIINLKRATFYGIGACLTKIVNAVLRDEKSTLMVGAQLNGEYKNKDLYTGVPAIIGSNGWERIIEWDLTKEEQEKFDKSCETLHKTIDSVKHLFE.

NAD(+)-binding residues include valine 16, aspartate 37, and tyrosine 69. Substrate-binding positions include glutamine 86, arginine 92, and 124 to 127; that span reads NPVD. NAD(+) is bound by residues 122 to 124 and serine 147; that span reads ASN. 152-155 contacts substrate; it reads DSAR. Histidine 179 acts as the Proton acceptor in catalysis. The residue at position 223 (tyrosine 223) is a Phosphotyrosine. Threonine 232 serves as a coordination point for substrate.

It belongs to the LDH/MDH superfamily. LDH family. As to quaternary structure, homotetramer.

It localises to the cytoplasm. The catalysed reaction is (S)-lactate + NAD(+) = pyruvate + NADH + H(+). Its pathway is fermentation; pyruvate fermentation to lactate; (S)-lactate from pyruvate: step 1/1. Catalyzes the conversion of lactate to pyruvate. The polypeptide is L-lactate dehydrogenase (Mycoplasma mycoides subsp. mycoides SC (strain CCUG 32753 / NCTC 10114 / PG1)).